The sequence spans 340 residues: MNVFEPRLSSWLENAGDDDDVVLSSRIRLARNLKDEQFPVYEQKEEIVDNIAEVFDDNFTLIKMNQISLLQKALLVEKHLISPYMMNKSEYGAVLLNEEENVSIMLNEEDHLRIQCMTPGLRLFDALEAALQIDGYVEEKLSYAFDKEFGYLTSCVTNIGTGMRASVMVHLPGLVTTKRIKSVIEAIRSLGFVVRGIYGEGSMPASNIFQVSNQVTLGKTETEIVEDLTQVMEQIIMQERVARTTIKQKFHIALEDRVFRSYGLLMNCRIISMKEASDAISDIRLGVELGFFEHISRQKMNELVLFSQPAFLRREAGRDMDELEEKVIRAKVIREILGDK.

A Phosphagen kinase C-terminal domain is found at 21–242 (VVLSSRIRLA…EQIIMQERVA (222 aa)). Residues 24-28 (SSRIR), histidine 79, arginine 113, 164-168 (RASVM), and 195-200 (RGIYGE) each bind ATP.

Belongs to the ATP:guanido phosphotransferase family.

It catalyses the reaction L-arginyl-[protein] + ATP = N(omega)-phospho-L-arginyl-[protein] + ADP + H(+). Functionally, catalyzes the specific phosphorylation of arginine residues in proteins. The chain is Protein-arginine kinase from Listeria monocytogenes serotype 4b (strain F2365).